A 350-amino-acid polypeptide reads, in one-letter code: GTPase Obg (350 aa).

The Obg domain occupies 1–158; that stretch reads MFIDSVKITL…RLVRLELKLI (158 aa). In terms of domain architecture, OBG-type G spans 159 to 339; sequence ADVGLVGFPN…LKFMLLEEIK (181 aa). GTP is bound by residues 165–172, 190–194, 212–215, 280–283, and 320–322; these read GFPNVGKS, FTTLT, DIPG, SKSD, and SSL. Mg(2+) contacts are provided by serine 172 and threonine 192.

This sequence belongs to the TRAFAC class OBG-HflX-like GTPase superfamily. OBG GTPase family. In terms of assembly, monomer. Mg(2+) is required as a cofactor.

It localises to the cytoplasm. Its function is as follows. An essential GTPase which binds GTP, GDP and possibly (p)ppGpp with moderate affinity, with high nucleotide exchange rates and a fairly low GTP hydrolysis rate. Plays a role in control of the cell cycle, stress response, ribosome biogenesis and in those bacteria that undergo differentiation, in morphogenesis control. The polypeptide is GTPase Obg (Campylobacter jejuni (strain RM1221)).